Reading from the N-terminus, the 445-residue chain is UPF0210 protein SSU05_0296 (445 aa).

The protein belongs to the UPF0210 family. In terms of assembly, homodimer.

The polypeptide is UPF0210 protein SSU05_0296 (Streptococcus suis (strain 05ZYH33)).